Here is a 374-residue protein sequence, read N- to C-terminus: Ribonuclease D (374 aa).

The 166-residue stretch at 6–171 folds into the 3'-5' exonuclease domain; sequence IISTTEDLKK…RATRVILLSK (166 aa). One can recognise an HRDC domain in the interval 213–292; sequence DRKSIGVAQE…ARALNKKEVD (80 aa).

It belongs to the RNase D family. The cofactor is a divalent metal cation.

The protein localises to the cytoplasm. The enzyme catalyses Exonucleolytic cleavage that removes extra residues from the 3'-terminus of tRNA to produce 5'-mononucleotides.. Its function is as follows. Exonuclease involved in the 3' processing of various precursor tRNAs. Initiates hydrolysis at the 3'-terminus of an RNA molecule and releases 5'-mononucleotides. The chain is Ribonuclease D from Desulfotalea psychrophila (strain LSv54 / DSM 12343).